The following is an 80-amino-acid chain: Defensin-like protein 50 (80 aa).

Positions 1–27 (MGFTKIVVTFFLVVMLAVSSSSQNAMA) are cleaved as a signal peptide. 4 disulfides stabilise this stretch: Cys-39-Cys-79, Cys-43-Cys-66, Cys-52-Cys-77, and Cys-56-Cys-78.

This sequence belongs to the DEFL family.

Its subcellular location is the secreted. The polypeptide is Defensin-like protein 50 (LCR49) (Arabidopsis thaliana (Mouse-ear cress)).